A 315-amino-acid polypeptide reads, in one-letter code: MTFQDLILTLQKFWADRGCLIVQPYNSEVGAGTFNPATFLRALGPEPWNVAFVEPSRRPADGRYGENPNRMQQFHQFQVILKPSPIDIQDLYLESLRAIGTNPLDHDVRFLEDDWESPTLGAWGLGWQVWIDGLEISQFTYFQQIGGIDCRPVSGELTYGLERIAMYLQDKDSIYDVVYSDRGGKIVRYGDIYQRAEWEWSTYNFEEADIAEHFAAFDVCEAEVKRLLYRGADPAAKGAAIDPKKALVLPAYDFVVKAAHRFNVLDARGAISVTERQRFIGRVRALARAVAETYVAQREALGYPLLGEQQAKAAE.

The protein belongs to the class-II aminoacyl-tRNA synthetase family. As to quaternary structure, tetramer of two alpha and two beta subunits.

Its subcellular location is the cytoplasm. The enzyme catalyses tRNA(Gly) + glycine + ATP = glycyl-tRNA(Gly) + AMP + diphosphate. The sequence is that of Glycine--tRNA ligase alpha subunit from Sorangium cellulosum (strain So ce56) (Polyangium cellulosum (strain So ce56)).